The chain runs to 65 residues: MNMKILVLVAVLCLVVSTHAERHSKTDMEDSPMIQERKYLPPGKPCYEATQKIPCCGVCSHNNCT.

The signal sequence occupies residues M1–A20. The propeptide occupies E21–R37. 2 disulfides stabilise this stretch: C46-C59 and C55-C64.

This sequence belongs to the neurotoxin 36 family. 02 subfamily. As to expression, expressed by the venom gland.

It is found in the secreted. In terms of biological role, reversibly blocks N-type calcium channels (Cav2.2/CACNA1B) in rat dorsal root ganglion cells. Elicits no toxic symptoms in either vertebrates or invertebrates during a period of 48 hours post-injection, when it was assayed in vivo by direct injection into mice and cockroaches. This is Hainantoxin-X-3 from Cyriopagopus hainanus (Chinese bird spider).